The primary structure comprises 123 residues: MIQEQTMLDVADNSGARSVMCIKVLGGSHRRYAAIGDIIKVTVKEAIPRGKVKKGDVLKAVVVRTKKGVRRPDGAVIRFDGNACVILNNNTEQPIGTRIFGPVTRELRSEKFMKIISLAPEVL.

It belongs to the universal ribosomal protein uL14 family. As to quaternary structure, part of the 50S ribosomal subunit. Forms a cluster with proteins L3 and L19. In the 70S ribosome, L14 and L19 interact and together make contacts with the 16S rRNA in bridges B5 and B8.

Binds to 23S rRNA. Forms part of two intersubunit bridges in the 70S ribosome. The sequence is that of Large ribosomal subunit protein uL14 from Histophilus somni (strain 129Pt) (Haemophilus somnus).